Reading from the N-terminus, the 726-residue chain is MTQQPFQLPHFYLPHPARLNPHLDEARAHSTTWAREMGMLEGSGVWEQSDLEAHDYGLLCAYTHPDCDGPALSLITDWYVWVFFFDDHFLEKYKRSQDRLAGKAHLDRLPLFMPLDDAAGMPEPRNPVEAGLADLWTRTVPAMSADWRRRFAVATEHLLNESMWELSNINEGRVANPVEYIEMRRKVGGAPWSAGLVEYATAEVPAAVAGTRPLRVLMETFSDAVHLRNDLFSYQREVEDEGELSNGVLVLETFFGCTTQEAADLVNDVLTSRLHQFEHTAFTEVPAVALEKGLTPLEVAAVGAYTKGLQDWQSGGHEWHMRSSRYMNKGERPLAGWQALTGPGTSAADVGALLADAVAQRARSYTYVPFQKVGPSVIPDIRMPYPLELSPALDGARRHLSEWCREMGILSEGVWDEDKLESCDLPLCAAGLDPDATQDQLDLASGWLAFGTYGDDYYPLVYGHRRDLAAARLTTTRLSDCMPLDGEPVPPPGNAMERSLIDLWVRTTAGMTPEERRPLKKAVDDMTEAWLWELSNQIQNRVPDPVDYLEMRRATFGSDLTLGLCRAGHGPAVPPEVYRSGPVRSLENAAIDYACLLNDVFSYQKEIEYEGEIHNAVLVVQNFFGVDYPAALGVVQDLMNQRMRQFEHVVAHELPVVYDDFQLSEEARTVMRGYVTDLQNWMAGILNWHRNVPRYKAEYLAGRTHGFLPDRIPAPPVPRSSPALTH.

Positions 2-354 (TQQPFQLPHF…TSAADVGALL (353 aa)) are germacradienol/germacrene D synthase. 9 residues coordinate Mg(2+): aspartate 86, glutamate 91, asparagine 267, threonine 271, glutamine 276, aspartate 455, asparagine 598, serine 602, and glutamate 606. The DDXXD motif 1; degenerate motif lies at 86 to 91 (DDHFLE). Residues 355-726 (ADAVAQRARS…VPRSSPALTH (372 aa)) form a geosmin synthase region. The DDXXD motif 2; degenerate signature appears at 455-459 (DDYYP).

This sequence belongs to the terpene synthase family. Mg(2+) serves as cofactor.

The catalysed reaction is (2E,6E)-farnesyl diphosphate + H2O = (1E,4S,5E,7R)-germacra-1(10),5-dien-11-ol + diphosphate. The enzyme catalyses (1E,4S,5E,7R)-germacra-1(10),5-dien-11-ol + H2O = (-)-geosmin + acetone. It catalyses the reaction (2E,6E)-farnesyl diphosphate = (-)-germacrene D + diphosphate. It participates in secondary metabolite biosynthesis; geosmin biosynthesis. Its pathway is sesquiterpene biosynthesis; germacradienol biosynthesis; germacradienol from farnesyl diphosphate: step 1/1. The protein operates within sesquiterpene biosynthesis; germacrene D biosynthesis; germacrene D from farnesyl diphosphate: step 1/1. Its function is as follows. Tow-domain protein where the N-terminal domain catalyzes the cyclization of farnesyl diphosphate (FPP) to a 85:15 mixture of the sesquiterpene alcohol germacradienol and the sesquiterpene hydrocarbon germacrene D. The C-terminal domain partially converts the germacradienol formed into geosmin, the characteristic odoriferous ('earthy aroma') constituent of Streptomyces species. This Streptomyces coelicolor (strain ATCC BAA-471 / A3(2) / M145) protein is Germacradienol/geosmin synthase (cyc2).